Here is a 386-residue protein sequence, read N- to C-terminus: Succinate--CoA ligase [ADP-forming] subunit beta (386 aa).

The ATP-grasp domain occupies 9–244 (KEILRKYGVP…HDEEDPLETR (236 aa)). ATP is bound by residues Lys46, 53–55 (GRG), Glu99, Cys102, and Glu107. Mg(2+)-binding residues include Asn199 and Asp213. Substrate is bound by residues Asn264 and 321–323 (GIM).

This sequence belongs to the succinate/malate CoA ligase beta subunit family. As to quaternary structure, heterotetramer of two alpha and two beta subunits. The cofactor is Mg(2+).

It carries out the reaction succinate + ATP + CoA = succinyl-CoA + ADP + phosphate. The enzyme catalyses GTP + succinate + CoA = succinyl-CoA + GDP + phosphate. The protein operates within carbohydrate metabolism; tricarboxylic acid cycle; succinate from succinyl-CoA (ligase route): step 1/1. Succinyl-CoA synthetase functions in the citric acid cycle (TCA), coupling the hydrolysis of succinyl-CoA to the synthesis of either ATP or GTP and thus represents the only step of substrate-level phosphorylation in the TCA. The beta subunit provides nucleotide specificity of the enzyme and binds the substrate succinate, while the binding sites for coenzyme A and phosphate are found in the alpha subunit. The sequence is that of Succinate--CoA ligase [ADP-forming] subunit beta from Rickettsia akari (strain Hartford).